The primary structure comprises 217 residues: Mucosal pentraxin (217 aa).

The first 19 residues, 1-19, serve as a signal peptide directing secretion; the sequence is MEKLLLGVLLLAFLPEGMT. One can recognise a Pentraxin (PTX) domain in the interval 24 to 217; the sequence is RGKVFIFPEQ…KGYVVVKPKL (194 aa). A disulfide bridge connects residues Cys-55 and Cys-114. Ca(2+) is bound by residues Asp-77, Asn-78, Glu-155, Gln-156, Asp-157, and Gln-167.

This sequence belongs to the pentraxin family. Homopentamer. Pentraxin (or pentaxin) have a discoid arrangement of 5 non-covalently bound subunits. Ca(2+) is required as a cofactor.

It localises to the secreted. The sequence is that of Mucosal pentraxin (MPTX) from Bos taurus (Bovine).